A 211-amino-acid polypeptide reads, in one-letter code: Outer-membrane lipoprotein carrier protein (211 aa).

The N-terminal stretch at Met-1–Ala-25 is a signal peptide.

It belongs to the LolA family. As to quaternary structure, monomer.

It is found in the periplasm. Participates in the translocation of lipoproteins from the inner membrane to the outer membrane. Only forms a complex with a lipoprotein if the residue after the N-terminal Cys is not an aspartate (The Asp acts as a targeting signal to indicate that the lipoprotein should stay in the inner membrane). This chain is Outer-membrane lipoprotein carrier protein, found in Pseudomonas putida (strain W619).